A 179-amino-acid polypeptide reads, in one-letter code: Natural killer cells antigen CD94 (179 aa).

Over 1 to 10 (MAVFKTTLWR) the chain is Cytoplasmic. A helical; Signal-anchor for type II membrane protein membrane pass occupies residues 11–31 (LISGTLGIICLSLMSTLGILL). Topologically, residues 32–179 (KNSFTKLSIE…NRYICKQQLI (148 aa)) are extracellular. Intrachain disulfides connect cysteine 58–cysteine 70 and cysteine 61–cysteine 72. One can recognise a C-type lectin domain in the interval 68–175 (YRCNCYFISS…CEDKNRYICK (108 aa)). N-linked (GlcNAc...) asparagine glycosylation is found at asparagine 83 and asparagine 132. 2 cysteine pairs are disulfide-bonded: cysteine 89–cysteine 174 and cysteine 152–cysteine 166.

As to quaternary structure, can form disulfide-bonded heterodimer with NKG2 family members KLRC1 and KLRC2. KLRD1-KLRC1 heterodimer interacts with peptide-bound HLA-E-B2M heterotrimeric complex. KLRD1 plays a prominent role in directly interacting with HLA-E. KLRD1-KLRC1 interacts with much higher affinity with peptide-bound HLA-E-B2M than KLRD1-KLRC2. Interacts with the adapter protein TYROBP/DAP12; this interaction is required for cell surface expression and cell activation. Expressed in NK cell subsets (at protein level). Expressed in memory/effector CD8-positive alpha-beta T cell subsets (at protein level). Expressed in melanoma-specific cytotoxic T cell clones (at protein level). Expressed in terminally differentiated cytotoxic gamma-delta T cells (at protein level). KLRD1-KLRC1 and KLRD1-KLRC2 are differentially expressed in NK and T cell populations, with only minor subsets expressing both receptor complexes (at protein level).

Its subcellular location is the cell membrane. Functionally, immune receptor involved in self-nonself discrimination. In complex with KLRC1 or KLRC2 on cytotoxic and regulatory lymphocyte subsets, recognizes non-classical major histocompatibility (MHC) class Ib molecule HLA-E loaded with self-peptides derived from the signal sequence of classical MHC class Ia and non-classical MHC class Ib molecules. Enables cytotoxic cells to monitor the expression of MHC class I molecules in healthy cells and to tolerate self. Primarily functions as a ligand binding subunit as it lacks the capacity to signal. In terms of biological role, KLRD1-KLRC1 acts as an immune inhibitory receptor. Key inhibitory receptor on natural killer (NK) cells that regulates their activation and effector functions. Dominantly counteracts T cell receptor signaling on a subset of memory/effector CD8-positive T cells as part of an antigen-driven response to avoid autoimmunity. On intraepithelial CD8-positive gamma-delta regulatory T cells triggers TGFB1 secretion, which in turn limits the cytotoxic programming of intraepithelial CD8-positive alpha-beta T cells, distinguishing harmless from pathogenic antigens. In HLA-E-rich tumor microenvironment, acts as an immune inhibitory checkpoint and may contribute to progressive loss of effector functions of NK cells and tumor-specific T cells, a state known as cell exhaustion. Upon HLA-E-peptide binding, transmits intracellular signals through KLRC1 immunoreceptor tyrosine-based inhibition motifs (ITIMs) by recruiting INPP5D/SHIP-1 and INPPL1/SHIP-2 tyrosine phosphatases to ITIMs, and ultimately opposing signals transmitted by activating receptors through dephosphorylation of proximal signaling molecules. KLRD1-KLRC2 acts as an immune activating receptor. On cytotoxic lymphocyte subsets recognizes HLA-E loaded with signal sequence-derived peptides from non-classical MHC class Ib HLA-G molecules, likely playing a role in the generation and effector functions of adaptive NK cells and in maternal-fetal tolerance during pregnancy. Regulates the effector functions of terminally differentiated cytotoxic lymphocyte subsets, and in particular may play a role in adaptive NK cell response to viral infection. Upon HLA-E-peptide binding, transmits intracellular signals via the adapter protein TYROBP/DAP12, triggering the phosphorylation of proximal signaling molecules and cell activation. Its function is as follows. (Microbial infection) Viruses like human cytomegalovirus have evolved an escape mechanism whereby virus-induced down-regulation of host MHC class I molecules is coupled to the binding of viral peptides to HLA-E, restoring HLA-E expression and inducing HLA-E-dependent NK cell immune tolerance to infected cells. Recognizes HLA-E in complex with human cytomegalovirus UL40-derived peptide (VMAPRTLIL) and inhibits NK cell cytotoxicity. Functionally, (Microbial infection) May recognize HLA-E in complex with HIV-1 gag/Capsid protein p24-derived peptide (AISPRTLNA) on infected cells and may inhibit NK cell cytotoxicity, a mechanism that allows HIV-1 to escape immune recognition. In terms of biological role, (Microbial infection) Upon SARS-CoV-2 infection, may contribute to functional exhaustion of cytotoxic NK cells and CD8-positive T cells. On NK cells, may recognize HLA-E in complex with SARS-CoV-2 S/Spike protein S1-derived peptide (LQPRTFLL) expressed on the surface of lung epithelial cells, inducing NK cell exhaustion and dampening antiviral immune surveillance. This Homo sapiens (Human) protein is Natural killer cells antigen CD94 (KLRD1).